The chain runs to 53 residues: uncharacterized protein (53 aa).

Residues 1-10 (MHILTRSSKN) show a composition bias toward polar residues. Residues 1 to 25 (MHILTRSSKNAFPRSRSRQDIHISS) are disordered.

This is an uncharacterized protein from Saccharomyces cerevisiae (strain ATCC 204508 / S288c) (Baker's yeast).